A 200-amino-acid polypeptide reads, in one-letter code: Small ribosomal subunit protein uS4 (200 aa).

A disordered region spans residues 22–42; sequence TGKELEKRPYAPGPHGPNQRK. In terms of domain architecture, S4 RNA-binding spans 92-152; the sequence is ARLDNLVYRM…EKSNNLVVVK (61 aa).

This sequence belongs to the universal ribosomal protein uS4 family. As to quaternary structure, part of the 30S ribosomal subunit. Contacts protein S5. The interaction surface between S4 and S5 is involved in control of translational fidelity.

In terms of biological role, one of the primary rRNA binding proteins, it binds directly to 16S rRNA where it nucleates assembly of the body of the 30S subunit. Its function is as follows. With S5 and S12 plays an important role in translational accuracy. The chain is Small ribosomal subunit protein uS4 from Bacillus thuringiensis subsp. konkukian (strain 97-27).